Consider the following 330-residue polypeptide: Ketol-acid reductoisomerase (NADP(+)) (330 aa).

A KARI N-terminal Rossmann domain is found at 3–184 (LPVYYDKDID…GGGRMGVLET (182 aa)). NADP(+)-binding positions include 26–29 (YGAQ), serine 52, and serine 54. Histidine 109 is an active-site residue. Glycine 135 lines the NADP(+) pocket. Residues 185–329 (SFKEECESDL…EILRAPFNHK (145 aa)) enclose the KARI C-terminal knotted domain. Positions 193, 197, 229, and 233 each coordinate Mg(2+). Serine 254 is a binding site for substrate.

Belongs to the ketol-acid reductoisomerase family. Requires Mg(2+) as cofactor.

The enzyme catalyses (2R)-2,3-dihydroxy-3-methylbutanoate + NADP(+) = (2S)-2-acetolactate + NADPH + H(+). It carries out the reaction (2R,3R)-2,3-dihydroxy-3-methylpentanoate + NADP(+) = (S)-2-ethyl-2-hydroxy-3-oxobutanoate + NADPH + H(+). The protein operates within amino-acid biosynthesis; L-isoleucine biosynthesis; L-isoleucine from 2-oxobutanoate: step 2/4. It participates in amino-acid biosynthesis; L-valine biosynthesis; L-valine from pyruvate: step 2/4. In terms of biological role, involved in the biosynthesis of branched-chain amino acids (BCAA). Catalyzes an alkyl-migration followed by a ketol-acid reduction of (S)-2-acetolactate (S2AL) to yield (R)-2,3-dihydroxy-isovalerate. In the isomerase reaction, S2AL is rearranged via a Mg-dependent methyl migration to produce 3-hydroxy-3-methyl-2-ketobutyrate (HMKB). In the reductase reaction, this 2-ketoacid undergoes a metal-dependent reduction by NADPH to yield (R)-2,3-dihydroxy-isovalerate. This chain is Ketol-acid reductoisomerase (NADP(+)), found in Helicobacter pylori (strain ATCC 700392 / 26695) (Campylobacter pylori).